A 502-amino-acid chain; its full sequence is Nucleoside transporter 2 (502 aa).

Residues Met-1–Thr-30 are Cytoplasmic-facing. A helical transmembrane segment spans residues Tyr-31–Ala-51. Residues Pro-52 to Thr-81 lie on the Extracellular side of the membrane. The chain crosses the membrane as a helical span at residues Phe-82 to Phe-102. Topologically, residues Met-103–Arg-111 are cytoplasmic. The chain crosses the membrane as a helical span at residues Leu-112 to Ala-132. Over Thr-133–Gln-137 the chain is Extracellular. The helical transmembrane segment at His-138–Cys-158 threads the bilayer. Topologically, residues Asp-159–Gln-178 are cytoplasmic. The helical transmembrane segment at Trp-179–Met-199 threads the bilayer. Residues Gly-200–Ser-210 lie on the Extracellular side of the membrane. Residues Arg-211–Leu-231 form a helical membrane-spanning segment. At Arg-232–Leu-352 the chain is on the cytoplasmic side. Residues Ala-252–Asp-273 are disordered. Residues Val-353–Val-373 form a helical membrane-spanning segment. Topologically, residues Ser-374 to Tyr-380 are extracellular. Residues Met-381–Phe-401 traverse the membrane as a helical segment. Residues Arg-402–Pro-408 lie on the Cytoplasmic side of the membrane. A helical membrane pass occupies residues Lys-409–Val-429. Residues Arg-430–Glu-436 are Extracellular-facing. The chain crosses the membrane as a helical span at residues Ala-437 to Ala-457. The Cytoplasmic portion of the chain corresponds to Cys-458–Ala-477. A helical membrane pass occupies residues Met-478–Ile-498. At Thr-499–His-502 the chain is on the extracellular side.

The protein belongs to the SLC29A/ENT transporter (TC 2.A.57) family.

It is found in the cell membrane. It carries out the reaction inosine(in) = inosine(out). The enzyme catalyses guanosine(in) = guanosine(out). In terms of biological role, high affinity transporter for inosine and guanosine. The sequence is that of Nucleoside transporter 2 from Crithidia fasciculata.